We begin with the raw amino-acid sequence, 879 residues long: Phosphoenolpyruvate carboxylase (879 aa).

Active-site residues include His137 and Lys545.

This sequence belongs to the PEPCase type 1 family. It depends on Mg(2+) as a cofactor.

The catalysed reaction is oxaloacetate + phosphate = phosphoenolpyruvate + hydrogencarbonate. In terms of biological role, forms oxaloacetate, a four-carbon dicarboxylic acid source for the tricarboxylic acid cycle. The chain is Phosphoenolpyruvate carboxylase from Yersinia enterocolitica serotype O:8 / biotype 1B (strain NCTC 13174 / 8081).